We begin with the raw amino-acid sequence, 443 residues long: C4-dicarboxylate transport protein (443 aa).

The next 9 helical transmembrane spans lie at 10-30 (SLYF…HFYP), 46-66 (LIKM…IAGM), 78-98 (YALL…LIVV), 143-163 (IVGA…VIFG), 199-219 (PIGA…GSLV), 224-244 (LMIC…GGIC), 291-311 (VVGL…SIYL), 332-352 (ITLL…TGSG), and 354-374 (IVLA…LALI).

This sequence belongs to the dicarboxylate/amino acid:cation symporter (DAACS) (TC 2.A.23) family.

Its subcellular location is the cell inner membrane. Functionally, responsible for the transport of dicarboxylates such as succinate, fumarate, and malate from the periplasm across the membrane. The chain is C4-dicarboxylate transport protein from Pseudomonas fluorescens (strain SBW25).